The chain runs to 789 residues: Fibrinogen alpha chain (789 aa).

The N-terminal stretch at 1-19 (MLSLRVTCLILSVASTVWT) is a signal peptide. Ser46 carries the post-translational modification Phosphoserine. A coiled-coil region spans residues 69–554 (CRMKGLIDEA…GRARARPTRD (486 aa)). Composition is skewed to basic and acidic residues over residues 263–287 (ERPG…RGDF) and 384–396 (KGDK…KEKV). The interval 263-420 (ERPGKDGGSR…TITKTVTGPD (158 aa)) is disordered. The span at 397–416 (TSSGTSTTHRSCSKTITKTV) shows a compositional bias: polar residues. Cys408 and Cys438 are disulfide-bonded. Ser447 carries the phosphoserine modification. The residue at position 504 (Pro504) is a 4-hydroxyproline; by P4HA1. Residues 526–541 (ADEAGSEAHREGETRN) show a composition bias toward basic and acidic residues. Residues 526-555 (ADEAGSEAHREGETRNTKRGRARARPTRDC) are disordered. One can recognise a Fibrinogen C-terminal domain in the interval 546 to 787 (RARARPTRDC…AVRMKIRPLV (242 aa)). The N-linked (GlcNAc...) asparagine glycan is linked to Asn609. The Ca(2+) site is built by Asp714, Asp716, Trp718, and Glu720. Cysteines 722 and 735 form a disulfide.

In terms of assembly, heterohexamer; disulfide linked. Contains 2 sets of 3 non-identical chains (alpha, beta and gamma). The 2 heterotrimers are in head to head conformation with the N-termini in a small central domain. In terms of processing, conversion of fibrinogen to fibrin is triggered by thrombin, which cleaves fibrinopeptides A and B from alpha and beta chains, and thus exposes the N-terminal polymerization sites responsible for the formation of the soft clot. The soft clot is converted into the hard clot by factor XIIIA which catalyzes the epsilon-(gamma-glutamyl)lysine cross-linking between gamma chains (stronger) and between alpha chains (weaker) of different monomers. Forms F13A-mediated cross-links between a glutamine and the epsilon-amino group of a lysine residue, forming fibronectin-fibrinogen heteropolymers. Post-translationally, phosphorylated by FAM20C in the extracellular medium. As to expression, expressed in liver.

Its subcellular location is the secreted. Functionally, cleaved by the protease thrombin to yield monomers which, together with fibrinogen beta (FGB) and fibrinogen gamma (FGG), polymerize to form an insoluble fibrin matrix. Fibrin has a major function in hemostasis as one of the primary components of blood clots. In addition, functions during the early stages of wound repair to stabilize the lesion and guide cell migration during re-epithelialization. Was originally thought to be essential for platelet aggregation, based on in vitro studies using anticoagulated blood. However, subsequent studies have shown that it is not absolutely required for thrombus formation in vivo. Enhances expression of SELP in activated platelets via an ITGB3-dependent pathway. Maternal fibrinogen is essential for successful pregnancy. Fibrin deposition is also associated with infection, where it protects against IFNG-mediated hemorrhage. May also facilitate the immune response via both innate and T-cell mediated pathways. This chain is Fibrinogen alpha chain, found in Mus musculus (Mouse).